A 136-amino-acid polypeptide reads, in one-letter code: Histone H3.1/H3.2 (136 aa).

The tract at residues Met1–Lys43 is disordered. N6,N6,N6-trimethyllysine; alternate is present on Lys5. Position 5 is an N6,N6-dimethyllysine; alternate (Lys5). N6-methyllysine; alternate occurs at positions 5 and 10. Lys10 bears the N6-acetyllysine; alternate mark. Phosphoserine is present on Ser11. N6,N6-dimethyllysine; alternate is present on Lys15. 5 positions are modified to N6-acetyllysine; alternate: Lys15, Lys19, Lys24, Lys28, and Lys37. Residues Lys19, Lys24, Lys28, and Lys37 each carry the N6-methyllysine; alternate modification. An N6,N6,N6-trimethyllysine; alternate mark is found at Lys28 and Lys37. An N6,N6-dimethyllysine; alternate mark is found at Lys28 and Lys37. N6-acetyllysine occurs at positions 57 and 65. N6,N6,N6-trimethyllysine; alternate is present on Lys80. Lys80 is subject to N6,N6-dimethyllysine; alternate. Lys80 carries the N6-methyllysine; alternate modification.

Belongs to the histone H3 family. As to quaternary structure, the nucleosome is a histone octamer containing two molecules each of H2A, H2B, H3 and H4 assembled in one H3-H4 heterotetramer and two H2A-H2B heterodimers. The octamer wraps approximately 147 bp of DNA. Phosphorylated to form H3S10ph. H3S10ph promotes subsequent H3K14ac formation and is required for transcriptional activation through TBP recruitment to the promoters. Post-translationally, mono-, di- and trimethylated by the COMPASS complex to form H3K4me1/2/3. H3K4me activates gene expression by regulating transcription elongation and plays a role in telomere length maintenance. H3K4me enrichment correlates with transcription levels, and occurs in a 5' to 3' gradient with H3K4me3 enrichment at the 5'-end of genes, shifting to H3K4me2 and then H3K4me1. Methylated by SET2 to form H3K36me. H3K36me represses gene expression. Methylated by DOT1 to form H3K79me. H3K79me is required for association of SIR proteins with telomeric regions and for telomeric silencing. The COMPASS-mediated formation of H3K4me2/3 and the DOT1-mediated formation of H3K79me require H2BK123ub1. In terms of processing, acetylation of histone H3 leads to transcriptional activation. H3K14ac formation by GCN5 is promoted by H3S10ph. H3K14ac can also be formed by ESA1. H3K56ac formation occurs predominantly in newly synthesized H3 molecules during G1, S and G2/M of the cell cycle and may be involved in DNA repair.

It is found in the nucleus. The protein localises to the chromosome. Functionally, core component of nucleosome. Nucleosomes wrap and compact DNA into chromatin, limiting DNA accessibility to the cellular machineries which require DNA as a template. Histones thereby play a central role in transcription regulation, DNA repair, DNA replication and chromosomal stability. DNA accessibility is regulated via a complex set of post-translational modifications of histones, also called histone code, and nucleosome remodeling. This chain is Histone H3.1/H3.2 (HHT1), found in Meyerozyma guilliermondii (strain ATCC 6260 / CBS 566 / DSM 6381 / JCM 1539 / NBRC 10279 / NRRL Y-324) (Yeast).